A 394-amino-acid chain; its full sequence is Protein-glutamate methylesterase/protein-glutamine glutaminase 2 (394 aa).

Residues 4-121 enclose the Response regulatory domain; that stretch reads KVLVVDDSSF…ARNRDEAISL (118 aa). Position 55 is a 4-aspartylphosphate (aspartate 55). Residues 202–394 enclose the CheB-type methylesterase domain; sequence SGKKYQLMAI…AERILVEVGR (193 aa). Residues serine 214, histidine 241, and aspartate 337 contribute to the active site.

The protein belongs to the CheB family. Post-translationally, phosphorylated by CheA. Phosphorylation of the N-terminal regulatory domain activates the methylesterase activity.

The protein localises to the cytoplasm. The enzyme catalyses [protein]-L-glutamate 5-O-methyl ester + H2O = L-glutamyl-[protein] + methanol + H(+). It catalyses the reaction L-glutaminyl-[protein] + H2O = L-glutamyl-[protein] + NH4(+). Functionally, involved in chemotaxis. Part of a chemotaxis signal transduction system that modulates chemotaxis in response to various stimuli. Catalyzes the demethylation of specific methylglutamate residues introduced into the chemoreceptors (methyl-accepting chemotaxis proteins or MCP) by CheR. Also mediates the irreversible deamidation of specific glutamine residues to glutamic acid. The polypeptide is Protein-glutamate methylesterase/protein-glutamine glutaminase 2 (Photobacterium profundum (strain SS9)).